Reading from the N-terminus, the 455-residue chain is Bifunctional protein GlmU (455 aa).

Residues 1 to 230 (MSNRFAVILA…VEETLGVNDR (230 aa)) form a pyrophosphorylase region. UDP-N-acetyl-alpha-D-glucosamine contacts are provided by residues 9-12 (LAAG), Lys23, Gln73, and 78-79 (GT). Asp103 serves as a coordination point for Mg(2+). UDP-N-acetyl-alpha-D-glucosamine contacts are provided by Gly140, Glu155, Asn170, and Asn228. Asn228 serves as a coordination point for Mg(2+). The tract at residues 231-251 (VALAQAEQVMKRRINEAWMRK) is linker. The segment at 252-455 (GVTFIDPEQT…KEHYVTKKNN (204 aa)) is N-acetyltransferase. 2 residues coordinate UDP-N-acetyl-alpha-D-glucosamine: Arg333 and Lys351. Catalysis depends on His363, which acts as the Proton acceptor. Residues Tyr366 and Asn377 each coordinate UDP-N-acetyl-alpha-D-glucosamine. Residues 386-387 (NY), Ala423, and Arg440 contribute to the acetyl-CoA site.

In the N-terminal section; belongs to the N-acetylglucosamine-1-phosphate uridyltransferase family. The protein in the C-terminal section; belongs to the transferase hexapeptide repeat family. In terms of assembly, homotrimer. It depends on Mg(2+) as a cofactor.

It is found in the cytoplasm. It catalyses the reaction alpha-D-glucosamine 1-phosphate + acetyl-CoA = N-acetyl-alpha-D-glucosamine 1-phosphate + CoA + H(+). The catalysed reaction is N-acetyl-alpha-D-glucosamine 1-phosphate + UTP + H(+) = UDP-N-acetyl-alpha-D-glucosamine + diphosphate. It functions in the pathway nucleotide-sugar biosynthesis; UDP-N-acetyl-alpha-D-glucosamine biosynthesis; N-acetyl-alpha-D-glucosamine 1-phosphate from alpha-D-glucosamine 6-phosphate (route II): step 2/2. Its pathway is nucleotide-sugar biosynthesis; UDP-N-acetyl-alpha-D-glucosamine biosynthesis; UDP-N-acetyl-alpha-D-glucosamine from N-acetyl-alpha-D-glucosamine 1-phosphate: step 1/1. The protein operates within bacterial outer membrane biogenesis; LPS lipid A biosynthesis. Catalyzes the last two sequential reactions in the de novo biosynthetic pathway for UDP-N-acetylglucosamine (UDP-GlcNAc). The C-terminal domain catalyzes the transfer of acetyl group from acetyl coenzyme A to glucosamine-1-phosphate (GlcN-1-P) to produce N-acetylglucosamine-1-phosphate (GlcNAc-1-P), which is converted into UDP-GlcNAc by the transfer of uridine 5-monophosphate (from uridine 5-triphosphate), a reaction catalyzed by the N-terminal domain. This Halalkalibacterium halodurans (strain ATCC BAA-125 / DSM 18197 / FERM 7344 / JCM 9153 / C-125) (Bacillus halodurans) protein is Bifunctional protein GlmU.